The primary structure comprises 104 residues: MNLQDVILTPIVTEKSQDLETIGANSKKGTRMVKYTVKVHIDANKTLIKEAFKKIFKVTPSSVNVQVYRGKIKRFRNMPAARPHWKKAIVTFRDGASIDFAKEA.

It belongs to the universal ribosomal protein uL23 family. Part of the 50S ribosomal subunit. Contacts protein L29, and trigger factor when it is bound to the ribosome.

One of the early assembly proteins it binds 23S rRNA. One of the proteins that surrounds the polypeptide exit tunnel on the outside of the ribosome. Forms the main docking site for trigger factor binding to the ribosome. The sequence is that of Large ribosomal subunit protein uL23 from Leptospira interrogans serogroup Icterohaemorrhagiae serovar copenhageni (strain Fiocruz L1-130).